Reading from the N-terminus, the 59-residue chain is Dendroaspin (59 aa).

Disulfide bonds link cysteine 3-cysteine 22, cysteine 17-cysteine 37, cysteine 39-cysteine 51, and cysteine 52-cysteine 57. The Cell attachment site motif lies at 43–45; it reads RGD.

This sequence belongs to the three-finger toxin family. Short-chain subfamily. Antiplatelet toxin sub-subfamily. Expressed by the venom gland.

It localises to the secreted. Inhibits ADP-induced platelet aggregation and inhibits the binding of purified platelet fibrinogen receptor alpha-IIb/beta-3 (ITGA2B/ITGB3) to immobilized fibrinogen. Has also been described to inhibit cell adhesion to fibrinogen, fibronectin, laminin and collagen. This is Dendroaspin from Dendroaspis jamesoni kaimosae (Eastern Jameson's mamba).